The sequence spans 193 residues: Bradykinin-potentiating and C-type natriuretic peptides (193 aa).

A signal peptide spans 1 to 23 (MFVSRLAASGLLLLALLALSLDG). A propeptide spanning residues 24–27 (KPVH) is cleaved from the precursor. The segment at 25–173 (PVHQSKPGRS…RMKGLAKKAM (149 aa)) is disordered. At glutamine 28 the chain carries Pyrrolidone carboxylic acid. 2 consecutive propeptides follow at residues 40-43 (LSAQ) and 58-64 (LSVQQWS). Glutamine 65 is modified (pyrrolidone carboxylic acid). Residues 75–169 (VVVQPHESPA…GGARRMKGLA (95 aa)) constitute a propeptide that is removed on maturation. Low complexity predominate over residues 95–123 (SPGPEAASGPAAPHRLPKSKGASATSAAS). Basic and acidic residues predominate over residues 125 to 150 (PMRDLRTDGKQERQKWGRMVQPDHHA). Residues 152–162 (PGGGGGGGGGA) show a composition bias toward gly residues. Residues 163–173 (RRMKGLAKKAM) show a composition bias toward basic residues. A disulfide bridge connects residues cysteine 177 and cysteine 193.

In the N-terminal section; belongs to the bradykinin-potentiating peptide family. The protein in the C-terminal section; belongs to the natriuretic peptide family. In terms of tissue distribution, expressed by the venom gland.

The protein resides in the secreted. Bradykinin-potentiating peptide both inhibits the activity of the angiotensin-converting enzyme (ACE) and enhances the action of bradykinin by inhibiting the peptidases that inactivate it. It acts as an indirect hypotensive agent. Neither synthetic Tf1, nor synthetic Tf2 show bradykinin-potentiating effects. Functionally, has a vasorelaxant activity in rat aortic strips and a diuretic potency in anesthetized rats. Its function is as follows. Has a vasorelaxant activity in rat aortic strips and a diuretic potency in anesthetized rats. Is as potent as Tf-CNP. The sequence is that of Bradykinin-potentiating and C-type natriuretic peptides from Protobothrops flavoviridis (Habu).